The sequence spans 155 residues: Leader peptidase HopD (155 aa).

This sequence belongs to the peptidase A24 family.

The polypeptide is Leader peptidase HopD (hopD) (Salmonella typhimurium (strain LT2 / SGSC1412 / ATCC 700720)).